The primary structure comprises 545 residues: Chaperonin GroEL (545 aa).

ATP-binding positions include 29–32, K50, 86–90, G414, 477–479, and D493; these read TMGP, DGTTT, and DAA.

The protein belongs to the chaperonin (HSP60) family. In terms of assembly, forms a cylinder of 14 subunits composed of two heptameric rings stacked back-to-back. Interacts with the co-chaperonin GroES.

The protein resides in the cytoplasm. The catalysed reaction is ATP + H2O + a folded polypeptide = ADP + phosphate + an unfolded polypeptide.. In terms of biological role, together with its co-chaperonin GroES, plays an essential role in assisting protein folding. The GroEL-GroES system forms a nano-cage that allows encapsulation of the non-native substrate proteins and provides a physical environment optimized to promote and accelerate protein folding. In Campylobacter jejuni subsp. jejuni serotype O:6 (strain 81116 / NCTC 11828), this protein is Chaperonin GroEL.